Reading from the N-terminus, the 471-residue chain is NALCN channel auxiliary factor 2 (471 aa).

A helical transmembrane segment spans residues 47 to 67; that stretch reads LASLLFFTVLLADHLWLCAGA. The interval 76 to 115 is disordered; sequence SAMRPPWGAGRERQPVPPRAVLPPPPPSPGEPSASSGTCG. Residues 90 to 105 are compositionally biased toward pro residues; that stretch reads PVPPRAVLPPPPPSPG. N-linked (GlcNAc...) asparagine glycosylation is present at N120. 2 disordered regions span residues 158 to 178 and 399 to 424; these read EPTT…APEF and HYHP…GGSR. The span at 161–171 shows a compositional bias: pro residues; the sequence is TPAPPLRPPDS. The helical transmembrane segment at 432 to 452 threads the bilayer; sequence LCVLVLILLHTVVSFSSSQSG.

It belongs to the NALF family.

The protein resides in the membrane. In terms of biological role, probable component of the NALCN channel complex, a channel that regulates the resting membrane potential and controls neuronal excitability. The sequence is that of NALCN channel auxiliary factor 2 (Nalf2) from Mus musculus (Mouse).